Here is a 273-residue protein sequence, read N- to C-terminus: Peptidoglycan-N-acetylglucosamine deacetylase BC_1974 (273 aa).

A helical transmembrane segment spans residues 10–30; the sequence is IVVVLIAIAAVAIGYYMFQSI. Residues 69-255 enclose the NodB homology domain; that stretch reads KVAYLTFDDG…GLKEKGYEFE (187 aa). The active-site Proton acceptor is aspartate 76. 3 residues coordinate Zn(2+): aspartate 77, histidine 126, and histidine 130. Catalysis depends on histidine 230, which acts as the Proton donor.

This sequence belongs to the polysaccharide deacetylase family. Zn(2+) is required as a cofactor. Co(2+) serves as cofactor. It depends on Ni(2+) as a cofactor.

The protein resides in the cell membrane. The catalysed reaction is peptidoglycan-N-acetyl-D-glucosamine + H2O = peptidoglycan-D-glucosamine + acetate.. Inhibited by the hydroxamate N-hydroxy-4-(naphthalene-1-yl)benzamide (NHNB). Catalyzes the deacetylation of N-acetylglucosamine (GlcNAc) residues in peptidoglycan. The chain is Peptidoglycan-N-acetylglucosamine deacetylase BC_1974 from Bacillus cereus (strain ATCC 14579 / DSM 31 / CCUG 7414 / JCM 2152 / NBRC 15305 / NCIMB 9373 / NCTC 2599 / NRRL B-3711).